A 712-amino-acid chain; its full sequence is DNA topoisomerase 3 (712 aa).

Residues 2–135 (KSLIIAEKPS…TKRLWISSVT (134 aa)) enclose the Toprim domain. Mg(2+)-binding residues include Glu8 and Asp104. One can recognise a Topo IA-type catalytic domain in the interval 152–581 (FNNLYHAALA…EMKAFTNQVV (430 aa)). An interaction with DNA region spans residues 186-191 (SLGRVQ). Residue Tyr305 is the O-(5'-phospho-DNA)-tyrosine intermediate of the active site.

Belongs to the type IA topoisomerase family. Mg(2+) is required as a cofactor.

The catalysed reaction is ATP-independent breakage of single-stranded DNA, followed by passage and rejoining.. In terms of biological role, releases the supercoiling and torsional tension of DNA, which is introduced during the DNA replication and transcription, by transiently cleaving and rejoining one strand of the DNA duplex. Introduces a single-strand break via transesterification at a target site in duplex DNA. The scissile phosphodiester is attacked by the catalytic tyrosine of the enzyme, resulting in the formation of a DNA-(5'-phosphotyrosyl)-enzyme intermediate and the expulsion of a 3'-OH DNA strand. The free DNA strand then undergoes passage around the unbroken strand, thus removing DNA supercoils. Finally, in the religation step, the DNA 3'-OH attacks the covalent intermediate to expel the active-site tyrosine and restore the DNA phosphodiester backbone. The polypeptide is DNA topoisomerase 3 (Staphylococcus saprophyticus subsp. saprophyticus (strain ATCC 15305 / DSM 20229 / NCIMB 8711 / NCTC 7292 / S-41)).